A 242-amino-acid chain; its full sequence is Proteasome subunit alpha (242 aa).

The protein belongs to the peptidase T1A family. As to quaternary structure, the 20S proteasome core is composed of 14 alpha and 14 beta subunits that assemble into four stacked heptameric rings, resulting in a barrel-shaped structure. The two inner rings, each composed of seven catalytic beta subunits, are sandwiched by two outer rings, each composed of seven alpha subunits. The catalytic chamber with the active sites is on the inside of the barrel. Has a gated structure, the ends of the cylinder being occluded by the N-termini of the alpha-subunits. Is capped at one or both ends by the proteasome regulatory ATPase, PAN.

The protein resides in the cytoplasm. The formation of the proteasomal ATPase PAN-20S proteasome complex, via the docking of the C-termini of PAN into the intersubunit pockets in the alpha-rings, triggers opening of the gate for substrate entry. Interconversion between the open-gate and close-gate conformations leads to a dynamic regulation of the 20S proteasome proteolysis activity. Its function is as follows. Component of the proteasome core, a large protease complex with broad specificity involved in protein degradation. This Sulfolobus acidocaldarius (strain ATCC 33909 / DSM 639 / JCM 8929 / NBRC 15157 / NCIMB 11770) protein is Proteasome subunit alpha.